A 35-amino-acid polypeptide reads, in one-letter code: Thrombin-like enzyme cerastobin (35 aa).

The 35-residue stretch at 1–35 (VIGGAKCNINEHRSIVLLYSSRLFGHTLINKEWVL) folds into the Peptidase S1 domain.

The protein belongs to the peptidase S1 family. Snake venom subfamily. Monomer. As to expression, expressed by the venom gland.

The protein resides in the secreted. Its activity is regulated as follows. Inhibited by diisopropylfluorophosphate (DFP). Functionally, thrombin-like snake venom serine protease, that cleaves both alpha-chain (FGA) and beta-chain (FGB) of fibrinogen. Partially degrades factor X (F10), and release bradykinin from kininogen (KNG). Potently induces platelet aggregation. Shows a proteolytic activity towards protein constituents of the platelets cytoskeleton. Hydrolyzes actin, actin-binding protein, and P235. Shows a preferential cleavage at Arg-|-Xaa bonds. The chain is Thrombin-like enzyme cerastobin from Cerastes vipera (Sahara sand viper).